The sequence spans 270 residues: MPELPEVETTVRGLVPFLEGQRLAAVTTFRPDLRRPFPVDLAQRLTGATVTRLSRRAKYGIVSTDRDDHMIFHLGMSGRWRTEGGEPGKHDHLLLETGAGHRLFLHDPRRFGSIDLVAGDPLASFAAFVTLGPEPLSDDFDAALLARAFAARRAPVKAMLLDQNVVAGLGNIYVCEALNMARISPLMPAAGVPKAKLAALVSAIRAVLTAAIAAGGSTLRDFLSPDGDLGYFAKDWRVYGREGEACECGGAIVRVVQSGRSTFYCRKCQR.

Proline 2 (schiff-base intermediate with DNA) is an active-site residue. Glutamate 3 functions as the Proton donor in the catalytic mechanism. Catalysis depends on lysine 58, which acts as the Proton donor; for beta-elimination activity. 3 residues coordinate DNA: histidine 90, arginine 109, and arginine 152. The FPG-type zinc-finger motif lies at 237–270 (RVYGREGEACECGGAIVRVVQSGRSTFYCRKCQR). Residue arginine 260 is the Proton donor; for delta-elimination activity of the active site.

The protein belongs to the FPG family. As to quaternary structure, monomer. Zn(2+) serves as cofactor.

It carries out the reaction Hydrolysis of DNA containing ring-opened 7-methylguanine residues, releasing 2,6-diamino-4-hydroxy-5-(N-methyl)formamidopyrimidine.. The catalysed reaction is 2'-deoxyribonucleotide-(2'-deoxyribose 5'-phosphate)-2'-deoxyribonucleotide-DNA = a 3'-end 2'-deoxyribonucleotide-(2,3-dehydro-2,3-deoxyribose 5'-phosphate)-DNA + a 5'-end 5'-phospho-2'-deoxyribonucleoside-DNA + H(+). Functionally, involved in base excision repair of DNA damaged by oxidation or by mutagenic agents. Acts as a DNA glycosylase that recognizes and removes damaged bases. Has a preference for oxidized purines, such as 7,8-dihydro-8-oxoguanine (8-oxoG). Has AP (apurinic/apyrimidinic) lyase activity and introduces nicks in the DNA strand. Cleaves the DNA backbone by beta-delta elimination to generate a single-strand break at the site of the removed base with both 3'- and 5'-phosphates. This chain is Formamidopyrimidine-DNA glycosylase, found in Sphingopyxis alaskensis (strain DSM 13593 / LMG 18877 / RB2256) (Sphingomonas alaskensis).